The sequence spans 246 residues: Small ribosomal subunit protein uS2 (246 aa).

It belongs to the universal ribosomal protein uS2 family.

In Dictyoglomus thermophilum (strain ATCC 35947 / DSM 3960 / H-6-12), this protein is Small ribosomal subunit protein uS2.